The primary structure comprises 351 residues: Glycerol-3-phosphate dehydrogenase [NAD(P)+] (351 aa).

The NADPH site is built by serine 18, tryptophan 19, arginine 38, and lysine 122. Sn-glycerol 3-phosphate contacts are provided by lysine 122, glycine 153, and serine 155. Alanine 157 contributes to the NADPH binding site. The sn-glycerol 3-phosphate site is built by lysine 208, aspartate 261, serine 271, arginine 272, and asparagine 273. The active-site Proton acceptor is the lysine 208. NADPH is bound at residue arginine 272. Position 297 (glutamate 297) interacts with NADPH.

The protein belongs to the NAD-dependent glycerol-3-phosphate dehydrogenase family.

The protein resides in the cytoplasm. The catalysed reaction is sn-glycerol 3-phosphate + NAD(+) = dihydroxyacetone phosphate + NADH + H(+). It carries out the reaction sn-glycerol 3-phosphate + NADP(+) = dihydroxyacetone phosphate + NADPH + H(+). Its pathway is membrane lipid metabolism; glycerophospholipid metabolism. Functionally, catalyzes the reduction of the glycolytic intermediate dihydroxyacetone phosphate (DHAP) to sn-glycerol 3-phosphate (G3P), the key precursor for phospholipid synthesis. In Bordetella bronchiseptica (strain ATCC BAA-588 / NCTC 13252 / RB50) (Alcaligenes bronchisepticus), this protein is Glycerol-3-phosphate dehydrogenase [NAD(P)+].